The sequence spans 225 residues: Membrane protein (225 aa).

Residues M1–E20 are Virion surface-facing. Residues Y21–A41 traverse the membrane as a helical segment. Over T42–K51 the chain is Intravirion. A helical membrane pass occupies residues M52–Y72. The Virion surface segment spans residues P73 to G77. Residues G78–I98 form a helical membrane-spanning segment. Topologically, residues Q99–T225 are intravirion.

This sequence belongs to the gammacoronaviruses M protein family. Homomultimer. Interacts with envelope E protein in the budding compartment of the host cell, which is located between endoplasmic reticulum and the Golgi complex. Forms a complex with HE and S proteins. Interacts with nucleocapsid N protein. This interaction probably participates in RNA packaging into the virus.

It localises to the virion membrane. Its subcellular location is the host Golgi apparatus membrane. Its function is as follows. Component of the viral envelope that plays a central role in virus morphogenesis and assembly via its interactions with other viral proteins. The sequence is that of Membrane protein from Avian infectious bronchitis virus (strain KB8523) (IBV).